The primary structure comprises 261 residues: 14-3-3-like protein GF14-12 (261 aa).

The protein belongs to the 14-3-3 family.

Its function is as follows. Is associated with a DNA binding complex to bind to the G box, a well-characterized cis-acting DNA regulatory element found in plant genes. This chain is 14-3-3-like protein GF14-12 (GRF2), found in Zea mays (Maize).